A 537-amino-acid polypeptide reads, in one-letter code: CTP synthase (537 aa).

An amidoligase domain region spans residues 1-268 (MGETKYIFVT…DSTILEKMGL (268 aa)). CTP is bound at residue Ser-15. Ser-15 contacts UTP. 16–21 (SLGKGI) serves as a coordination point for ATP. Tyr-56 serves as a coordination point for L-glutamine. Asp-73 is a binding site for ATP. 2 residues coordinate Mg(2+): Asp-73 and Glu-143. CTP contacts are provided by residues 150–152 (DIE), 189–194 (KTKPTQ), and Lys-225. UTP is bound by residues 189-194 (KTKPTQ) and Lys-225. The Glutamine amidotransferase type-1 domain maps to 296–537 (NIALVGKYDL…VKAAIENEKN (242 aa)). Gly-357 is an L-glutamine binding site. Cys-384 acts as the Nucleophile; for glutamine hydrolysis in catalysis. L-glutamine is bound by residues 385–388 (LGMQ), Glu-408, and Arg-465. Catalysis depends on residues His-510 and Glu-512.

It belongs to the CTP synthase family. In terms of assembly, homotetramer.

It carries out the reaction UTP + L-glutamine + ATP + H2O = CTP + L-glutamate + ADP + phosphate + 2 H(+). The enzyme catalyses L-glutamine + H2O = L-glutamate + NH4(+). The catalysed reaction is UTP + NH4(+) + ATP = CTP + ADP + phosphate + 2 H(+). Its pathway is pyrimidine metabolism; CTP biosynthesis via de novo pathway; CTP from UDP: step 2/2. Its activity is regulated as follows. Allosterically activated by GTP, when glutamine is the substrate; GTP has no effect on the reaction when ammonia is the substrate. The allosteric effector GTP functions by stabilizing the protein conformation that binds the tetrahedral intermediate(s) formed during glutamine hydrolysis. Inhibited by the product CTP, via allosteric rather than competitive inhibition. Functionally, catalyzes the ATP-dependent amination of UTP to CTP with either L-glutamine or ammonia as the source of nitrogen. Regulates intracellular CTP levels through interactions with the four ribonucleotide triphosphates. This Bacteroides thetaiotaomicron (strain ATCC 29148 / DSM 2079 / JCM 5827 / CCUG 10774 / NCTC 10582 / VPI-5482 / E50) protein is CTP synthase.